An 86-amino-acid chain; its full sequence is Large ribosomal subunit protein eL43 (86 aa).

The segment at 38 to 59 adopts a C4-type zinc-finger fold; sequence CPVCGRKAVRRISTGIWQCQKC.

Belongs to the eukaryotic ribosomal protein eL43 family. Requires Zn(2+) as cofactor.

This chain is Large ribosomal subunit protein eL43, found in Thermococcus onnurineus (strain NA1).